The chain runs to 141 residues: Large ribosomal subunit protein uL11 (141 aa).

This sequence belongs to the universal ribosomal protein uL11 family. As to quaternary structure, part of the ribosomal stalk of the 50S ribosomal subunit. Interacts with L10 and the large rRNA to form the base of the stalk. L10 forms an elongated spine to which L12 dimers bind in a sequential fashion forming a multimeric L10(L12)X complex. In terms of processing, one or more lysine residues are methylated.

Functionally, forms part of the ribosomal stalk which helps the ribosome interact with GTP-bound translation factors. This is Large ribosomal subunit protein uL11 from Pediococcus pentosaceus (strain ATCC 25745 / CCUG 21536 / LMG 10740 / 183-1w).